Consider the following 268-residue polypeptide: Aliphatic sulfonates import ATP-binding protein SsuB 3 (268 aa).

A disordered region spans residues 1 to 27; that stretch reads MTAAEAPLPPLAPRERTATTAAERRTG. Residues 13-26 are compositionally biased toward basic and acidic residues; the sequence is PRERTATTAAERRT. Positions 32–247 constitute an ABC transporter domain; that stretch reads VSLSGVRKSF…DRNDPEALRY (216 aa). 64–71 contacts ATP; it reads GPSGTGKT.

This sequence belongs to the ABC transporter superfamily. Aliphatic sulfonates importer (TC 3.A.1.17.2) family. As to quaternary structure, the complex is composed of two ATP-binding proteins (SsuB), two transmembrane proteins (SsuC) and a solute-binding protein (SsuA).

It is found in the cell membrane. It carries out the reaction ATP + H2O + aliphatic sulfonate-[sulfonate-binding protein]Side 1 = ADP + phosphate + aliphatic sulfonateSide 2 + [sulfonate-binding protein]Side 1.. Functionally, part of the ABC transporter complex SsuABC involved in aliphatic sulfonates import. Responsible for energy coupling to the transport system. The sequence is that of Aliphatic sulfonates import ATP-binding protein SsuB 3 from Rhodococcus jostii (strain RHA1).